The primary structure comprises 548 residues: Probable malate:quinone oxidoreductase (548 aa).

The segment at 522-548 (KPQAADSTPKAQLKPQPARKEVADIAL) is disordered. The segment covering 539 to 548 (ARKEVADIAL) has biased composition (basic and acidic residues).

The protein belongs to the MQO family. FAD is required as a cofactor.

The catalysed reaction is (S)-malate + a quinone = a quinol + oxaloacetate. It functions in the pathway carbohydrate metabolism; tricarboxylic acid cycle; oxaloacetate from (S)-malate (quinone route): step 1/1. This is Probable malate:quinone oxidoreductase from Escherichia fergusonii (strain ATCC 35469 / DSM 13698 / CCUG 18766 / IAM 14443 / JCM 21226 / LMG 7866 / NBRC 102419 / NCTC 12128 / CDC 0568-73).